Reading from the N-terminus, the 330-residue chain is MKKSFILQQQEISFTKNTFTEKLAEHLGLVEVQGPILSQVGNGIQDNLSGTEKAVQVNVKMITDAAFEVVHSLAKWKRHTLARFGFAEGEGLFVHMKALRPDEDSLDQTHSVYVDQWDWEKVIPEGRRNLDYLKETVREIYAAILETEAAVDKKYGLKSFLPKEITFIHSEDLVKDYPGMTDKERENELCKKYGAVFLIGIGGVLPDGKPHDGRAPDYDDWTTTSEGEYKGLNGDILVWNPILNRAFEVSSMGIRVDETALRKQLSITGDEDRLKFDWHQDLINGRMPLSIGGGIGQSRLAMLLLQKRHIGEVQSSVWPKAVMEQYENIL.

The protein belongs to the class-II aminoacyl-tRNA synthetase family. AsnA subfamily.

It localises to the cytoplasm. It catalyses the reaction L-aspartate + NH4(+) + ATP = L-asparagine + AMP + diphosphate + H(+). The protein operates within amino-acid biosynthesis; L-asparagine biosynthesis; L-asparagine from L-aspartate (ammonia route): step 1/1. The chain is Aspartate--ammonia ligase from Mannheimia succiniciproducens (strain KCTC 0769BP / MBEL55E).